Reading from the N-terminus, the 235-residue chain is Uridylate kinase (235 aa).

Gly-10–Ser-11 is an ATP binding site. Gly-45 is a binding site for UMP. 2 residues coordinate ATP: Gly-46 and Arg-50. UMP is bound by residues Asp-67 and Val-115 to Thr-121. ATP is bound by residues Thr-141, Tyr-147, and Asp-150.

It belongs to the UMP kinase family. In terms of assembly, homohexamer.

It is found in the cytoplasm. It catalyses the reaction UMP + ATP = UDP + ADP. It participates in pyrimidine metabolism; CTP biosynthesis via de novo pathway; UDP from UMP (UMPK route): step 1/1. Its activity is regulated as follows. Inhibited by UTP. Its function is as follows. Catalyzes the reversible phosphorylation of UMP to UDP. The protein is Uridylate kinase of Methanocorpusculum labreanum (strain ATCC 43576 / DSM 4855 / Z).